A 124-amino-acid polypeptide reads, in one-letter code: Small ribosomal subunit protein uS13 (124 aa).

Residues 94-124 (GLPLRGQRTKNNSRTRKGKRKTVANKKKATK) are disordered. Positions 100-124 (QRTKNNSRTRKGKRKTVANKKKATK) are enriched in basic residues.

The protein belongs to the universal ribosomal protein uS13 family. As to quaternary structure, part of the 30S ribosomal subunit. Forms a loose heterodimer with protein S19. Forms two bridges to the 50S subunit in the 70S ribosome.

In terms of biological role, located at the top of the head of the 30S subunit, it contacts several helices of the 16S rRNA. In the 70S ribosome it contacts the 23S rRNA (bridge B1a) and protein L5 of the 50S subunit (bridge B1b), connecting the 2 subunits; these bridges are implicated in subunit movement. Contacts the tRNAs in the A and P-sites. The chain is Small ribosomal subunit protein uS13 from Flavobacterium johnsoniae (strain ATCC 17061 / DSM 2064 / JCM 8514 / BCRC 14874 / CCUG 350202 / NBRC 14942 / NCIMB 11054 / UW101) (Cytophaga johnsonae).